Consider the following 337-residue polypeptide: DNA-directed RNA polymerase subunit alpha (337 aa).

Residues 1 to 233 (MVREKVTVST…DLFIPFLHME (233 aa)) form an alpha N-terminal domain (alpha-NTD) region. The alpha C-terminal domain (alpha-CTD) stretch occupies residues 264–337 (NKKIALKSIF…FVIDLAKNKF (74 aa)).

The protein belongs to the RNA polymerase alpha chain family. In terms of assembly, in plastids the minimal PEP RNA polymerase catalytic core is composed of four subunits: alpha, beta, beta', and beta''. When a (nuclear-encoded) sigma factor is associated with the core the holoenzyme is formed, which can initiate transcription.

The protein localises to the plastid. The protein resides in the chloroplast. The catalysed reaction is RNA(n) + a ribonucleoside 5'-triphosphate = RNA(n+1) + diphosphate. Functionally, DNA-dependent RNA polymerase catalyzes the transcription of DNA into RNA using the four ribonucleoside triphosphates as substrates. This chain is DNA-directed RNA polymerase subunit alpha, found in Atropa belladonna (Belladonna).